The chain runs to 369 residues: tRNA/tmRNA (uracil-C(5))-methyltransferase (369 aa).

S-adenosyl-L-methionine-binding residues include Gln190, Tyr218, Asn223, Glu239, and Asp301. The active-site Nucleophile is Cys326. Glu360 acts as the Proton acceptor in catalysis.

It belongs to the class I-like SAM-binding methyltransferase superfamily. RNA M5U methyltransferase family. TrmA subfamily.

It carries out the reaction uridine(54) in tRNA + S-adenosyl-L-methionine = 5-methyluridine(54) in tRNA + S-adenosyl-L-homocysteine + H(+). The enzyme catalyses uridine(341) in tmRNA + S-adenosyl-L-methionine = 5-methyluridine(341) in tmRNA + S-adenosyl-L-homocysteine + H(+). Dual-specificity methyltransferase that catalyzes the formation of 5-methyluridine at position 54 (m5U54) in all tRNAs, and that of position 341 (m5U341) in tmRNA (transfer-mRNA). The protein is tRNA/tmRNA (uracil-C(5))-methyltransferase of Vibrio atlanticus (strain LGP32) (Vibrio splendidus (strain Mel32)).